Here is a 258-residue protein sequence, read N- to C-terminus: Gamma-secretase subunit Aph-1b (258 aa).

The next 7 helical transmembrane spans lie at 3 to 23 (VAVFFGCTFIAFGPAIALFMF), 32 to 52 (VIFLIAGAFFWLVSLLLSSLV), 70 to 90 (GLLIFGVVLSVLLQEAFRYGY), 118 to 138 (AYVSGLGFGFMSGAFSVVNIL), 161 to 181 (AFMTLAIILLHMFWGVVFFEA), 187 to 207 (WWALGAVVASHLVVSCLTFVN), and 214 to 234 (LIPTYIILSVMAVWAYLCAGG).

This sequence belongs to the APH-1 family. As to quaternary structure, component of the gamma-secretase complex, a complex composed of a presenilin homodimer (PSEN1 or PSEN2), nicastrin (NCSTN), APH1 and PEN2.

It is found in the membrane. Functionally, essential subunit of the gamma-secretase complex, an endoprotease complex that catalyzes the intramembrane cleavage of integral proteins such as Notch receptors. It may represent a stabilizing cofactor for the presenilin homodimer that promotes the formation of a stable complex. The protein is Gamma-secretase subunit Aph-1b (aph1b) of Danio rerio (Zebrafish).